The following is a 326-amino-acid chain: Probable iron chelatin transport system permease protein HP_0889 (326 aa).

A run of 10 helical transmembrane segments spans residues 7 to 27 (IALA…ESLS), 64 to 84 (ILAL…QTIF), 91 to 111 (PFLL…IAVV), 113 to 133 (SNIA…VLAM), 142 to 162 (LSLV…AGAI), 164 to 184 (FFVI…SLSL), 187 to 207 (YKDC…LFLL), 241 to 261 (VASA…LVIP), 275 to 295 (LLLS…VVAK), and 301 to 321 (DLPV…WLLF).

This sequence belongs to the binding-protein-dependent transport system permease family. FecCD subfamily.

The protein resides in the cell inner membrane. In terms of biological role, part of a binding-protein-dependent transport system for an iron chelatin; probably responsible for the translocation of the substrate across the membrane. This is Probable iron chelatin transport system permease protein HP_0889 from Helicobacter pylori (strain ATCC 700392 / 26695) (Campylobacter pylori).